We begin with the raw amino-acid sequence, 619 residues long: Chaperone protein HscA homolog (619 aa).

The protein belongs to the heat shock protein 70 family.

Its function is as follows. Chaperone involved in the maturation of iron-sulfur cluster-containing proteins. Has a low intrinsic ATPase activity which is markedly stimulated by HscB. This is Chaperone protein HscA homolog from Shewanella amazonensis (strain ATCC BAA-1098 / SB2B).